A 380-amino-acid polypeptide reads, in one-letter code: Chaperone protein DnaJ (380 aa).

Residues 5–70 form the J domain; sequence DYYEVLGVAK…QKRAAYDQYG (66 aa). The CR-type zinc finger occupies 140-218; the sequence is GYDTQIRVPS…CHGAGKVKET (79 aa). The Zn(2+) site is built by Cys153, Cys156, Cys170, Cys173, Cys192, Cys195, Cys206, and Cys209. 4 CXXCXGXG motif repeats span residues 153-160, 170-177, 192-199, and 206-213; these read CEVCHGSG, CPTCSGSG, CPKCHGTG, and CGHCHGAG.

It belongs to the DnaJ family. Homodimer. Requires Zn(2+) as cofactor.

It localises to the cytoplasm. Its function is as follows. Participates actively in the response to hyperosmotic and heat shock by preventing the aggregation of stress-denatured proteins and by disaggregating proteins, also in an autonomous, DnaK-independent fashion. Unfolded proteins bind initially to DnaJ; upon interaction with the DnaJ-bound protein, DnaK hydrolyzes its bound ATP, resulting in the formation of a stable complex. GrpE releases ADP from DnaK; ATP binding to DnaK triggers the release of the substrate protein, thus completing the reaction cycle. Several rounds of ATP-dependent interactions between DnaJ, DnaK and GrpE are required for fully efficient folding. Also involved, together with DnaK and GrpE, in the DNA replication of plasmids through activation of initiation proteins. The sequence is that of Chaperone protein DnaJ from Paraburkholderia xenovorans (strain LB400).